The primary structure comprises 261 residues: MICOS complex subunit Mic25 (261 aa).

The N-myristoyl glycine moiety is linked to residue G2. S13, S31, and S33 each carry phosphoserine. Disordered regions lie at residues 39 to 59 (KDCS…PECS), 81 to 114 (CGPA…VKED), and 140 to 165 (TEKH…RLTR). A coiled-coil region spans residues 109–202 (SAVKEDLKKF…AELYKLSSQQ (94 aa)). The segment covering 154 to 165 (THEQQQSDRLTR) has biased composition (basic and acidic residues). One can recognise a CHCH domain in the interval 220–261 (EPVCSGLQAQILRCYRDHLHEVLLCSDLAKAYQHCVSTARKG). Short sequence motifs (cx9C motif) lie at residues 223-233 (CSGLQAQILRC) and 244-254 (CSDLAKAYQHC). 2 disulfide bridges follow: C223/C254 and C233/C244.

Belongs to the MICOS complex subunit Mic19 family. Metazoan Mic25 subfamily. As to quaternary structure, component of the mitochondrial contact site and cristae organizing system (MICOS) complex, composed of at least MICOS10/MIC10, CHCHD3/MIC19, CHCHD6/MIC25, APOOL/MIC27, IMMT/MIC60, APOO/MIC23/MIC26 and MICOS13/MIC13. This complex was also known under the names MINOS or MitOS complex. The MICOS complex associates with mitochondrial outer membrane proteins SAMM50, MTX1 and MTX2 (together described as components of the mitochondrial outer membrane sorting assembly machinery (SAM) complex) and DNAJC11, mitochondrial inner membrane protein TMEM11 and with HSPA9. The MICOS and SAM complexes together with DNAJC11 are part of a large protein complex spanning both membranes termed the mitochondrial intermembrane space bridging (MIB) complex. Interacts with DISC1. Interacts with IMMT/MIC60.

It localises to the mitochondrion inner membrane. Its subcellular location is the mitochondrion. Its function is as follows. Component of the MICOS complex, a large protein complex of the mitochondrial inner membrane that plays crucial roles in the maintenance of crista junctions, inner membrane architecture, and formation of contact sites to the outer membrane. In Rattus norvegicus (Rat), this protein is MICOS complex subunit Mic25 (Chchd6).